A 185-amino-acid chain; its full sequence is Anterior gradient protein 2 (185 aa).

The N-terminal stretch at 1–18 (MQTGLSLACLVLLCSVLG) is a signal peptide. The tract at residues 25-45 (PKRQAGATDTNGAAKSEPAPV) is disordered.

This sequence belongs to the AGR family. Expressed in the anterior of the dorsal ectoderm from late gastrula stages onwards. Becomes restricted to the cement gland anlage at the onset of neurulation (stages 13 to 14) and expressed exclusively in the cement gland from stage 18 onwards, with transient expression in the hatching gland during tailbud stages.

It localises to the secreted. Its function is as follows. Involved in cement gland formation; probably specifies dorsal ectoderm to acquire an anterior fate such as cement gland and forebrain. Signals via the FGF pathway. This chain is Anterior gradient protein 2 (ag2), found in Xenopus laevis (African clawed frog).